Reading from the N-terminus, the 116-residue chain is Large ribosomal subunit protein bL19 (116 aa).

It belongs to the bacterial ribosomal protein bL19 family.

Its function is as follows. This protein is located at the 30S-50S ribosomal subunit interface and may play a role in the structure and function of the aminoacyl-tRNA binding site. The polypeptide is Large ribosomal subunit protein bL19 (Staphylococcus epidermidis (strain ATCC 35984 / DSM 28319 / BCRC 17069 / CCUG 31568 / BM 3577 / RP62A)).